A 166-amino-acid chain; its full sequence is Protein-export protein SecB (166 aa).

This sequence belongs to the SecB family. Homotetramer, a dimer of dimers. One homotetramer interacts with 1 SecA dimer.

It is found in the cytoplasm. In terms of biological role, one of the proteins required for the normal export of preproteins out of the cell cytoplasm. It is a molecular chaperone that binds to a subset of precursor proteins, maintaining them in a translocation-competent state. It also specifically binds to its receptor SecA. The protein is Protein-export protein SecB of Actinobacillus pleuropneumoniae serotype 7 (strain AP76).